The primary structure comprises 989 residues: Autotransporter adhesin/invasin TibA (989 aa).

Residues 1–54 (MNKVYNTVWNESTGTWVVTSELTRKGGLRPRQIKRTVLAGLIAGLLMPSMPALA) form the signal peptide. O-alpha-linked (D-glycero-D-manno-heptose) serine glycans are attached at residues Ser74, Ser86, Ser93, Ser94, Ser97, Ser100, Ser112, Ser113, Ser116, Ser119, Ser124, Ser131, Ser132, and Ser135. A run of 12 repeats spans residues 82-100 (TTINSGGKQYVSSGGSATS), 101-119 (TTINIGGVQHVSSGGSATS), 120-138 (STINSGGHQHVSSGGSATN), 139-157 (TTVNNGGRQTVFSGGSAMG), 158-176 (TIINSGGDQYVISGGSATS), 177-195 (ASVTSGARQFVSSGGIVKA), 196-214 (TSVNSGGRQYVRDGGSATD), 215-233 (TVLNNTGRQFVSSGGSAAK), 234-251 (TTINSGGGMYLYGGSATG), 252-270 (TSIYNGGRQYVSSGGSATN), 271-289 (TTVYSGGRQHVYIDGNVTE), and 290-308 (TTITSGGMLQVEAGGSASK). The interval 82 to 308 (TTINSGGKQY…QVEAGGSASK (227 aa)) is 12 X 19 AA approximate repeats. The segment covering 110-123 (HVSSGGSATSSTIN) has biased composition (polar residues). The tract at residues 110 to 146 (HVSSGGSATSSTINSGGHQHVSSGGSATNTTVNNGGR) is disordered. Low complexity predominate over residues 124–135 (SGGHQHVSSGGS). The span at 136-146 (ATNTTVNNGGR) shows a compositional bias: polar residues. Residues Ser151, Ser154, Ser162, Ser170, Ser176, Ser181, Ser188, Ser189, Ser200, Ser226, Ser227, Ser230, Ser238, Ser248, Ser263, Ser264, Ser275, Ser294, Ser305, Ser313, and Ser322 are each glycosylated (O-alpha-linked (D-glycero-D-manno-heptose) serine). Positions 623–686 (WYLKADTPPP…GTSSSPVRRT (64 aa)) are disordered. Residues 629–638 (TPPPVTPPTN) are compositionally biased toward pro residues. 8 repeat units span residues 639 to 643 (PDADN), 644 to 648 (PDAGN), 649 to 653 (PDAGN), 654 to 658 (PDAGN), 659 to 663 (PDAGN), 664 to 668 (PDAGK), 669 to 673 (PGTGK), and 674 to 678 (PDAGT). Over residues 639–667 (PDADNPDAGNPDAGNPDAGNPDAGNPDAG) the composition is skewed to low complexity. Residues 639–678 (PDADNPDAGNPDAGNPDAGNPDAGNPDAGKPGTGKPDAGT) form an 8 X 5 AA repeats of P-[DG]-[AGT]-[DGA]-[NKT] region. Residues 721–989 (NTRAPGGVWG…TGGVGFRINF (269 aa)) form the Autotransporter domain.

Homohexamer. Post-translationally, glycosylated by TibC. Glycosylation is required for adhesion to and invasion of host cells. Glycosylation is dispensable for bacterial autoaggregation and biofilm formation.

The protein localises to the cell outer membrane. Functionally, mediates both adhesion to and invasion of human intestine epithelial cells. Also mediates bacterial cell aggregation via intercellular TibA-TibA interaction. Enhances biofilm formation. The polypeptide is Autotransporter adhesin/invasin TibA (Escherichia coli O78:H11 (strain H10407 / ETEC)).